Reading from the N-terminus, the 150-residue chain is UPF0178 protein Daro_2879 (150 aa).

It belongs to the UPF0178 family.

This chain is UPF0178 protein Daro_2879, found in Dechloromonas aromatica (strain RCB).